A 962-amino-acid polypeptide reads, in one-letter code: Synphilin-1 (962 aa).

Disordered stretches follow at residues 80 to 99 (SPLK…DQKN), 104 to 137 (YQKG…EPSQ), and 222 to 249 (TALR…PAYE). ANK repeat units lie at residues 348–379 (NGNN…CLNE), 383–412 (EQLT…AIAE), 418–447 (DFPS…EQGI), and 455–484 (EGNS…NVTM). Positions 522-548 (VKLTKQLKEQTVERVTLQSQLQQLLEA) form a coiled coil. Positions 548–590 (AQKSEGKSLPSSPSSPSSPASTKSQWKALDTDEESTGKSKVGA) are disordered. The segment covering 554 to 571 (KSLPSSPSSPSSPASTKS) has biased composition (low complexity). The stretch at 602-631 (VSSRARTKGKDEDSDKILRQLLGKEISENV) is one ANK 5 repeat. The span at 667–684 (RQLMQRSLSESDTDSNNS) shows a compositional bias: low complexity. Residues 667–852 (RQLMQRSLSE…QRTSESGEQM (186 aa)) form a disordered region. Basic and acidic residues predominate over residues 685–699 (EDPKNTPVKRADRPR). The stretch at 698 to 728 (PRPQPIVESVENVDSAESLHLMIKKHSLASG) is one ANK 6 repeat. Polar residues predominate over residues 772 to 790 (PSTEATQSSPDSTAAQKVA). Residues 831–840 (NGEKDKDKGR) are compositionally biased toward basic and acidic residues.

As to quaternary structure, associates with SNCA, RNF19A and PRKN. Post-translationally, ubiquitinated; mediated by SIAH1 or RNF19A and leading to its subsequent proteasomal degradation.

The protein is Synphilin-1 (Sncaip) of Mus musculus (Mouse).